Reading from the N-terminus, the 339-residue chain is Heat-inducible transcription repressor HrcA (339 aa).

Belongs to the HrcA family.

Its function is as follows. Negative regulator of class I heat shock genes (grpE-dnaK-dnaJ and groELS operons). Prevents heat-shock induction of these operons. This is Heat-inducible transcription repressor HrcA from Clostridium perfringens (strain ATCC 13124 / DSM 756 / JCM 1290 / NCIMB 6125 / NCTC 8237 / Type A).